We begin with the raw amino-acid sequence, 367 residues long: Protein-glutamate methylesterase/protein-glutamine glutaminase 1 (367 aa).

In terms of domain architecture, Response regulatory spans lysine 9–lysine 126. Aspartate 60 carries the 4-aspartylphosphate modification. Residues leucine 168–methionine 360 enclose the CheB-type methylesterase domain. Catalysis depends on residues serine 180, histidine 206, and aspartate 302.

This sequence belongs to the CheB family. In terms of processing, phosphorylated by CheA. Phosphorylation of the N-terminal regulatory domain activates the methylesterase activity.

The protein resides in the cytoplasm. The enzyme catalyses [protein]-L-glutamate 5-O-methyl ester + H2O = L-glutamyl-[protein] + methanol + H(+). It carries out the reaction L-glutaminyl-[protein] + H2O = L-glutamyl-[protein] + NH4(+). Its function is as follows. Involved in chemotaxis. Part of a chemotaxis signal transduction system that modulates chemotaxis in response to various stimuli. Catalyzes the demethylation of specific methylglutamate residues introduced into the chemoreceptors (methyl-accepting chemotaxis proteins or MCP) by CheR. Also mediates the irreversible deamidation of specific glutamine residues to glutamic acid. The sequence is that of Protein-glutamate methylesterase/protein-glutamine glutaminase 1 from Burkholderia pseudomallei (strain K96243).